A 797-amino-acid chain; its full sequence is Sodium/hydrogen exchanger 4 (797 aa).

The Cytoplasmic segment spans residues methionine 1–asparagine 13. The segment at residues tryptophan 14–serine 28 is an intramembrane region (name=A/M1). Residues tyrosine 29–isoleucine 69 are Cytoplasmic-facing. The disordered stretch occupies residues glutamate 32 to aspartate 52. An intramembrane region (name=B/M2) is located at residues proline 70 to tyrosine 90. Residues histidine 91–proline 94 are Cytoplasmic-facing. A helical transmembrane segment spans residues histidine 95–isoleucine 114. At phenylalanine 115–serine 127 the chain is on the extracellular side. The helical transmembrane segment at serine 128–threonine 148 threads the bilayer. Topologically, residues arginine 149–asparagine 154 are cytoplasmic. A helical membrane pass occupies residues isoleucine 155–leucine 175. The Extracellular portion of the chain corresponds to serine 176–leucine 194. A helical membrane pass occupies residues histidine 195–phenylalanine 215. Topologically, residues glutamate 216–methionine 226 are cytoplasmic. A helical transmembrane segment spans residues methionine 227–isoleucine 247. The Extracellular segment spans residues alanine 248–phenylalanine 270. A helical transmembrane segment spans residues valine 271 to isoleucine 291. Residues threonine 292–leucine 304 are Cytoplasmic-facing. Residues isoleucine 305–isoleucine 325 traverse the membrane as a helical segment. Over leucine 326 to lysine 352 the chain is Extracellular. Asparagine 342 carries N-linked (GlcNAc...) asparagine glycosylation. The chain crosses the membrane as a helical span at residues tyrosine 353–serine 373. The Cytoplasmic portion of the chain corresponds to threonine 374 to alanine 384. Residues phenylalanine 385–phenylalanine 405 traverse the membrane as a helical segment. Topologically, residues tyrosine 406–aspartate 420 are extracellular. Positions glutamine 421 to leucine 441 form an intramembrane region, name=L. Topologically, residues proline 442 to lysine 450 are extracellular. Residues leucine 451 to isoleucine 471 form a helical membrane-spanning segment. The Cytoplasmic segment spans residues glycine 472–lysine 797. Residues tyrosine 759–threonine 769 show a composition bias toward acidic residues. Positions tyrosine 759–lysine 797 are disordered. Positions serine 783–lysine 797 are enriched in basic residues.

The protein belongs to the monovalent cation:proton antiporter 1 (CPA1) transporter (TC 2.A.36) family. As to quaternary structure, homodimer; each protomer has one site for sodium and one site for proton binding. Interacts with CHP1 and CHP2. Post-translationally, may be phosphorylated. Expressed in kidney. Expressed in uterus and endometrial epithelial cells. Expressed in the inner segments of inner medullary collecting ducts (IMCD) in kidney. Expressed in AGTR1-positive neurons in organum vasculosum of the lamina terminalis (at protein level).

The protein resides in the basolateral cell membrane. The protein localises to the apical cell membrane. It is found in the zymogen granule membrane. It carries out the reaction Na(+)(in) + H(+)(out) = Na(+)(out) + H(+)(in). It catalyses the reaction Na(+)(out) + NH4(+)(in) = Na(+)(in) + NH4(+)(out). Its activity is regulated as follows. Up-regulated in response to high extracellular sodium concentration. In terms of biological role, electroneutral antiporter that exchanges sodium for protons or ammonium ions at the basolateral membrane of epithelia to regulate cell volume and intracellular pH upon hypertonic conditions. As part of transcellular ammonia transport in renal tubules, mediates basolateral ammonium extrusion in the medullary thick ascending limb, regulating the corticopapillary ammonium gradient and overall renal acid excretion. Mediates sodium:proton exchange in gastric parietal cells secondary to cAMP-dependent acid secretion and hyperosmolarity. Possibly coupled to chloride:bicarbonate antiporter, enables loading of parietal cells with sodium and chloride ions to maintain cell volume and normal gastric acid secretion. Functions as a sodium sensor in neurons of organum vasculosum of the lamina terminalis where it regulates water intake in response to increased sodium concentration in body fluids. This Mus musculus (Mouse) protein is Sodium/hydrogen exchanger 4 (Slc9a4).